Reading from the N-terminus, the 445-residue chain is UDP-N-acetylglucosamine--peptide N-acetylglucosaminyltransferase stabilizing protein GtfB (445 aa).

The interval 55–171 (KPLYFNQVPV…TLPGQSMRYF (117 aa)) is glycosyltransferase 1.

The protein belongs to the GtfB family. In terms of assembly, interacts with glycosyltransferase GtfA; probably forms a heterotetramer with 2 subunits each of GtfA and GtfB. Part of the accessory SecA2/SecY2 protein translocation apparatus.

It is found in the cell membrane. It participates in protein modification; protein glycosylation. Its function is as follows. Required for the polymorphic O-glycosylation of the serine-rich repeat protein PsrP. A stabilizing protein that is part of the accessory SecA2/SecY2 system specifically required to export serine-rich repeat cell wall proteins encoded upstream in the same operon. The GtfA-GtfB complex adds GlcNAc from UDP-GlcNAc to PsrP, attaching the first sugar residue. Stabilizes the glycosylation activity of GtfA. Has no N-acetylglucosaminyl transferase activity on its own. This chain is UDP-N-acetylglucosamine--peptide N-acetylglucosaminyltransferase stabilizing protein GtfB, found in Streptococcus pneumoniae serotype 4 (strain ATCC BAA-334 / TIGR4).